The sequence spans 621 residues: Exonuclease 3'-5' domain-containing protein 2 (621 aa).

Residues 1–4 (MSRQ) are Mitochondrial intermembrane-facing. Residues 5-25 (NLVALTVTTLLGVAVGGFVLW) form a helical membrane-spanning segment. The Cytoplasmic segment spans residues 26 to 621 (KGIQRRRRSK…FGEDLPIQLS (596 aa)). A disordered region spans residues 34–68 (SKTSPVTQQPQQKVLGSRELPPPEDDQLHSSAPRS). Over residues 36 to 47 (TSPVTQQPQQKV) the composition is skewed to polar residues. A divalent metal cation contacts are provided by aspartate 108, glutamate 110, and aspartate 246. One can recognise a 3'-5' exonuclease domain in the interval 155–247 (ILADGTILKV…DQVIYAARDA (93 aa)). Residues 299–343 (RLGEEVNGEATESQQKPRNKKSKMDGMVPGNHQGRDPRKHKRKPL) form a disordered region.

This sequence belongs to the EXD2 family. Homodimer. Interacts with RBBP8, MRE11 and BRCA1. Mg(2+) serves as cofactor. Mn(2+) is required as a cofactor.

The protein localises to the mitochondrion outer membrane. It localises to the mitochondrion matrix. It is found in the nucleus. Its subcellular location is the chromosome. It catalyses the reaction Exonucleolytic cleavage in the 3'- to 5'-direction to yield nucleoside 5'-phosphates.. Functionally, exonuclease that has both 3'-5' exoribonuclease and exodeoxyribonuclease activities, depending on the divalent metal cation used as cofactor. In presence of Mg(2+), only shows 3'-5' exoribonuclease activity, while it shows both exoribonuclease and exodeoxyribonuclease activities in presence of Mn(2+). Acts as an exoribonuclease in mitochondrion, possibly by regulating ATP production and mitochondrial translation. Also involved in the response to DNA damage. Acts as 3'-5' exodeoxyribonuclease for double-strand breaks resection and efficient homologous recombination. Plays a key role in controlling the initial steps of chromosomal break repair, it is recruited to chromatin in a damage-dependent manner and functionally interacts with the MRN complex to accelerate resection through its 3'-5' exonuclease activity, which efficiently processes double-stranded DNA substrates containing nicks. Also involved in response to replicative stress: recruited to stalled forks and is required to stabilize and restart stalled replication forks by restraining excessive fork regression, thereby suppressing their degradation. This chain is Exonuclease 3'-5' domain-containing protein 2, found in Homo sapiens (Human).